A 503-amino-acid chain; its full sequence is Cytochrome P450 3A17 (503 aa).

Cysteine 442 is a heme binding site.

Belongs to the cytochrome P450 family. Requires heme as cofactor.

It localises to the endoplasmic reticulum membrane. Its subcellular location is the microsome membrane. It carries out the reaction an organic molecule + reduced [NADPH--hemoprotein reductase] + O2 = an alcohol + oxidized [NADPH--hemoprotein reductase] + H2O + H(+). Its function is as follows. Cytochromes P450 are a group of heme-thiolate monooxygenases. In liver microsomes, this enzyme is involved in an NADPH-dependent electron transport pathway. It oxidizes a variety of structurally unrelated compounds, including steroids, fatty acids, and xenobiotics. The protein is Cytochrome P450 3A17 (CYP3A17) of Cavia porcellus (Guinea pig).